The following is a 122-amino-acid chain: Large ribosomal subunit protein uL14 (122 aa).

The protein belongs to the universal ribosomal protein uL14 family. In terms of assembly, part of the 50S ribosomal subunit. Forms a cluster with proteins L3 and L19. In the 70S ribosome, L14 and L19 interact and together make contacts with the 16S rRNA in bridges B5 and B8.

In terms of biological role, binds to 23S rRNA. Forms part of two intersubunit bridges in the 70S ribosome. The polypeptide is Large ribosomal subunit protein uL14 (Borrelia turicatae (strain 91E135)).